A 723-amino-acid polypeptide reads, in one-letter code: Homeobox protein HAT3.1 (723 aa).

Over residues 1-10 (MYKAVSKRVT) the composition is skewed to basic residues. 2 disordered regions span residues 1–94 (MYKA…GSHR) and 135–173 (KRAQ…QVRE). The segment covering 11-23 (RSSGSGLKQTNVD) has biased composition (polar residues). The span at 58–83 (LHHEIMDHGKGNEEQKPTPQTVKKDS) shows a compositional bias: basic and acidic residues. The segment at 265–322 (DIFCAKCGSKDLSVDNDIILCDGFCDRGFHQYCLEPPLRKEDIPPDDEGWLCPGCDCK) adopts a PHD-type zinc-finger fold. Disordered stretches follow at residues 357 to 628 (GGQN…KTQR) and 680 to 723 (VEKL…RRRK). Residues 365–407 (LPSDDSDDEEYDPDCLNDNENDEDGSDDNEESENEDGSSDETE) are compositionally biased toward acidic residues. Residues 417-427 (ESFKEGKDIMK) show a composition bias toward basic and acidic residues. Acidic residues predominate over residues 435–453 (DDSEDDDYDPDAPTCDDDK). Composition is skewed to basic and acidic residues over residues 518–530 (RNVE…KLYD) and 547–556 (DKTARMGKED). A compositionally biased stretch (basic residues) spans 580–589 (KKLIRKSKRA). A DNA-binding region (homeobox) is located at residues 614–673 (SSSSACKQTDPKTQRLYISFQENQYPDKATKESLAKELQMTVKQVNNWFKHRRWSINSKP). The segment covering 680-690 (VEKLKTGKEGE) has biased composition (basic and acidic residues). Residues 695–705 (VAGSSKQTMET) are compositionally biased toward polar residues.

Belongs to the PHD-associated homeobox family. In terms of tissue distribution, primarily detected in root tissue.

It localises to the nucleus. Binds only to large DNA fragments. Recognizes a DNA fragment carrying 8 copies of box7 motif of the light-induced cab-E promoter of Nicotiana plumbaginifolia. Also recognizes the box7m1 motif. This chain is Homeobox protein HAT3.1 (HAT3.1), found in Arabidopsis thaliana (Mouse-ear cress).